Consider the following 873-residue polypeptide: Potassium voltage-gated channel subfamily KQT member 3 (873 aa).

Residues Met-1–Glu-41 are disordered. Residues Met-1–Gly-121 lie on the Cytoplasmic side of the membrane. Residues Ala-11 to Ala-26 show a composition bias toward gly residues. Thr-82 is subject to Phosphothreonine. Residues Trp-122 to Thr-144 form a helical membrane-spanning segment. Residues Thr-145–Gly-154 lie on the Extracellular side of the membrane. The helical transmembrane segment at Asp-155–Ile-176 threads the bilayer. The Cytoplasmic portion of the chain corresponds to Trp-177–Phe-194. The helical transmembrane segment at Ala-195–Val-214 threads the bilayer. Residues Ala-215–Ser-226 are Extracellular-facing. A helical; Voltage-sensor transmembrane segment spans residues Leu-227–Gly-245. Arg-244 contributes to the a 1,2-diacyl-sn-glycero-3-phospho-(1D-myo-inositol-4,5-bisphosphate) binding site. Topologically, residues Gly-246 to Ala-257 are cytoplasmic. The chain crosses the membrane as a helical span at residues His-258–Val-283. Residue Lys-260 participates in a 1,2-diacyl-sn-glycero-3-phospho-(1D-myo-inositol-4,5-bisphosphate) binding. Residues Glu-284–Thr-303 lie on the Extracellular side of the membrane. Positions Tyr-304–Ala-316 form an intramembrane region, pore-forming. Positions Thr-317–Asp-322 match the Selectivity filter motif. The Extracellular segment spans residues Thr-317 to Thr-327. The chain crosses the membrane as a helical span at residues Trp-328–Ser-354. Residues Gly-355–Thr-873 lie on the Cytoplasmic side of the membrane. Residues Ala-357–Thr-538 form a mediates interaction with calmodulin region. A 1,2-diacyl-sn-glycero-3-phospho-(1D-myo-inositol-4,5-bisphosphate) is bound at residue Lys-367. Disordered regions lie at residues Pro-575–Glu-603, Arg-723–Tyr-742, and Glu-766–Thr-873. Polar residues-rich tracts occupy residues Lys-588–Arg-601, Gly-725–Thr-741, and Asp-844–Thr-873.

This sequence belongs to the potassium channel family. KQT (TC 1.A.1.15) subfamily. Kv7.3/KCNQ3 sub-subfamily. Heterotetramer with KCNQ2; forms heterotetrameric M-channel responsible for the native M-current. Interacts with calmodulin; the interaction is calcium-independent, constitutive and participates in the proper assembly of a functional M-channel. Heteromultimer with KCNQ5. May associate with KCNE2. Interacts with IQCJ-SCHIP1. Interacts (via the pore module) with SLC5A3/SMIT1; forms a coregulatory complex that alters ion selectivity, voltage dependence and gating kinetics of the channel. KCNQ2/KCNQ3 are ubiquitinated by NEDD4L. Ubiquitination leads to protein degradation. Degradation induced by NEDD4L is inhibited by USP36. Expressed in brain and sympathetic ganglia. In brain, expressed in cortex, hippocampus and at much lower levels in cerebellum. In sympathetic ganglia, expressed at approximately equal levels in both superior cervical ganglia and prevertebral ganglia.

The protein localises to the cell membrane. It catalyses the reaction K(+)(in) = K(+)(out). It carries out the reaction Rb(+)(in) = Rb(+)(out). The catalysed reaction is Cs(+)(in) = Cs(+)(out). The enzyme catalyses Na(+)(in) = Na(+)(out). Its activity is regulated as follows. Phosphatidylinositol-4,5-bisphosphate (PIP2) potentiates the activation of KCNQ channels by enhancing the electro-mechanical coupling of the voltage-sensing domain (VSD) and the pore-forming domain (PD). In the closed state of the channel, PIP2 is anchored at the S2-S3 loop; upon channel activation, PIP2 interacts with the S4-S5 linker and is involved in channel gating. Calcium suppresses KCNQ2-KCNQ3 channel currents, with calcium-bound calmodulin inducing a change in channel configuration which leads to the reduction of channel affinity for PIP2 and subsequent current suppression. M-channel is blocked by XE991. Pore-forming subunit of the voltage-gated potassium (Kv) M-channel which is responsible for the M-current, a key controller of neuronal excitability. M-channel is composed of pore-forming subunits KCNQ2 and KCNQ3 assembled as heterotetramers, each subunit containing a voltage sensing domain (VSD) and a pore-forming domain (PD). The native M-current has a slowly activating and deactivating potassium conductance which plays a critical role in determining the subthreshold electrical excitability of neurons as well as the responsiveness to synaptic inputs. M-channel is selectively permeable in vitro to other cations besides potassium, in decreasing order of affinity K(+) &gt; Rb(+) &gt; Cs(+) &gt; Na(+). M-channel association with SLC5A3/SMIT1 alters channel ion selectivity, increasing Na(+) and Cs(+) permeation relative to K(+). Suppressed by activation of M1 muscarinic acetylcholine receptors. KCNQ3 also associates with KCNQ5 to form a functional channel in vitro and may also contribute to the M-current in brain. The sequence is that of Potassium voltage-gated channel subfamily KQT member 3 from Rattus norvegicus (Rat).